Here is a 502-residue protein sequence, read N- to C-terminus: CDP-diacylglycerol--glycerol-3-phosphate 3-phosphatidyltransferase (502 aa).

ATP is bound at residue 58–65 (STLYIGKE). PLD phosphodiesterase domains follow at residues 143–169 (GWGLQHMKIYGADDNLIISGANLSRDY) and 410–443 (KGNTYHAKGFWLSTQHHKHPFLTTIGSSNYTSRS). Active-site residues include His148, Lys150, and Asp155.

The protein belongs to the CDP-alcohol phosphatidyltransferase class-II family.

The protein localises to the mitochondrion. It carries out the reaction a CDP-1,2-diacyl-sn-glycerol + sn-glycerol 3-phosphate = a 1,2-diacyl-sn-glycero-3-phospho-(1'-sn-glycero-3'-phosphate) + CMP + H(+). Its pathway is phospholipid metabolism; phosphatidylglycerol biosynthesis; phosphatidylglycerol from CDP-diacylglycerol: step 1/2. Functionally, functions in the biosynthesis of the anionic phospholipids phosphatidylglycerol and cardiolipin. This Schizosaccharomyces pombe (strain 972 / ATCC 24843) (Fission yeast) protein is CDP-diacylglycerol--glycerol-3-phosphate 3-phosphatidyltransferase (pgs1).